We begin with the raw amino-acid sequence, 284 residues long: uncharacterized protein (284 aa).

Residues 12-32 (ILFILFVVAFCVYLVPRVAIN) traverse the membrane as a helical segment.

Belongs to the serine esterase family.

Its subcellular location is the membrane. This is an uncharacterized protein from Escherichia coli (strain K12).